A 101-amino-acid polypeptide reads, in one-letter code: Large ribosomal subunit protein bL28 (101 aa).

The protein belongs to the bacterial ribosomal protein bL28 family.

The protein is Large ribosomal subunit protein bL28 of Methylorubrum populi (strain ATCC BAA-705 / NCIMB 13946 / BJ001) (Methylobacterium populi).